The chain runs to 87 residues: Small ribosomal subunit protein bS20 (87 aa).

The segment covering Met1–Ile11 has biased composition (basic residues). Residues Met1–His23 form a disordered region.

It belongs to the bacterial ribosomal protein bS20 family.

Its function is as follows. Binds directly to 16S ribosomal RNA. This is Small ribosomal subunit protein bS20 from Geotalea daltonii (strain DSM 22248 / JCM 15807 / FRC-32) (Geobacter daltonii).